A 72-amino-acid polypeptide reads, in one-letter code: Guanine nucleotide-binding protein G(I)/G(S)/G(O) subunit gamma-12 (72 aa).

N-acetylserine is present on serine 2. 2 positions are modified to phosphoserine: serine 10 and serine 26. Phosphotyrosine is present on tyrosine 42. The residue at position 49 (serine 49) is a Phosphoserine. Cysteine 69 carries the post-translational modification Cysteine methyl ester. Residue cysteine 69 is the site of S-geranylgeranyl cysteine attachment. The propeptide at 70–72 is removed in mature form; the sequence is IIL.

Belongs to the G protein gamma family. In terms of assembly, g proteins are composed of 3 units, alpha, beta and gamma.

It localises to the cell membrane. Functionally, guanine nucleotide-binding proteins (G proteins) are involved as a modulator or transducer in various transmembrane signaling systems. The beta and gamma chains are required for the GTPase activity, for replacement of GDP by GTP, and for G protein-effector interaction. In Mus musculus (Mouse), this protein is Guanine nucleotide-binding protein G(I)/G(S)/G(O) subunit gamma-12 (Gng12).